The chain runs to 389 residues: Trans-2-enoyl-CoA reductase [NADH] (389 aa).

Residues 47–52 (GASTGY), 73–74 (FE), 110–111 (DA), and 138–139 (LA) contribute to the NAD(+) site. Tyr224 is a substrate binding site. Catalysis depends on Tyr234, which acts as the Proton donor. NAD(+) contacts are provided by residues Lys243 and 272-274 (LVT).

Belongs to the TER reductase family. In terms of assembly, monomer.

The catalysed reaction is a 2,3-saturated acyl-CoA + NAD(+) = a (2E)-enoyl-CoA + NADH + H(+). The protein operates within lipid metabolism; fatty acid biosynthesis. Its function is as follows. Involved in the fatty acid synthesis (FAS II). Catalyzes the reduction of a carbon-carbon double bond in an enoyl moiety that is covalently linked to a coenzyme A (CoA). The polypeptide is Trans-2-enoyl-CoA reductase [NADH] (Clostridium perfringens (strain ATCC 13124 / DSM 756 / JCM 1290 / NCIMB 6125 / NCTC 8237 / Type A)).